The sequence spans 158 residues: Transcription elongation factor GreA (158 aa).

Belongs to the GreA/GreB family.

Functionally, necessary for efficient RNA polymerase transcription elongation past template-encoded arresting sites. The arresting sites in DNA have the property of trapping a certain fraction of elongating RNA polymerases that pass through, resulting in locked ternary complexes. Cleavage of the nascent transcript by cleavage factors such as GreA or GreB allows the resumption of elongation from the new 3'terminus. GreA releases sequences of 2 to 3 nucleotides. This chain is Transcription elongation factor GreA, found in Yersinia pestis.